A 340-amino-acid polypeptide reads, in one-letter code: Protein-glutamate methylesterase/protein-glutamine glutaminase 1 (340 aa).

The 118-residue stretch at 5-122 (KLFIVDDSAL…KVVSELKEKI (118 aa)) folds into the Response regulatory domain. Asp56 is modified (4-aspartylphosphate). The 193-residue stretch at 148 to 340 (GKNGRQLVVI…AIAEEIAANI (193 aa)) folds into the CheB-type methylesterase domain. Catalysis depends on residues Ser160, His187, and Asp285.

This sequence belongs to the CheB family. Post-translationally, phosphorylated by CheA. Phosphorylation of the N-terminal regulatory domain activates the methylesterase activity.

The protein localises to the cytoplasm. It catalyses the reaction [protein]-L-glutamate 5-O-methyl ester + H2O = L-glutamyl-[protein] + methanol + H(+). The enzyme catalyses L-glutaminyl-[protein] + H2O = L-glutamyl-[protein] + NH4(+). Involved in chemotaxis. Part of a chemotaxis signal transduction system that modulates chemotaxis in response to various stimuli. Catalyzes the demethylation of specific methylglutamate residues introduced into the chemoreceptors (methyl-accepting chemotaxis proteins or MCP) by CheR. Also mediates the irreversible deamidation of specific glutamine residues to glutamic acid. The protein is Protein-glutamate methylesterase/protein-glutamine glutaminase 1 of Carboxydothermus hydrogenoformans (strain ATCC BAA-161 / DSM 6008 / Z-2901).